We begin with the raw amino-acid sequence, 812 residues long: Glycerol-3-phosphate acyltransferase (812 aa).

Positions 308–313 (CHRSHM) match the HXXXXD motif motif.

The protein belongs to the GPAT/DAPAT family.

It is found in the cell inner membrane. The enzyme catalyses sn-glycerol 3-phosphate + an acyl-CoA = a 1-acyl-sn-glycero-3-phosphate + CoA. The protein operates within phospholipid metabolism; CDP-diacylglycerol biosynthesis; CDP-diacylglycerol from sn-glycerol 3-phosphate: step 1/3. This Pseudoalteromonas translucida (strain TAC 125) protein is Glycerol-3-phosphate acyltransferase.